The sequence spans 885 residues: Putative membrane protein YdgH (885 aa).

A run of 7 helical transmembrane segments spans residues 9–29, 181–201, 202–222, 227–247, 278–298, 304–324, and 354–374; these read WAIA…SPNL, IIGL…PIVV, VGFS…NVDF, FTQT…CILL, ISGF…FAIF, VAVG…LFMV, and VARP…FILT. Residues 498 to 518 form a disordered region; that stretch reads MAGQTGSASNGGSGGSLGDAA. 5 consecutive transmembrane segments (helical) span residues 716-736, 740-760, 772-792, 817-837, and 847-867; these read MVIM…SMIM, MIAS…LIFV, VPFF…IFLL, VIIT…PSGV, and IIIG…PAII.

It belongs to the resistance-nodulation-cell division (RND) (TC 2.A.6) family. MmpL subfamily.

It is found in the cell membrane. The sequence is that of Putative membrane protein YdgH (ydgH) from Bacillus subtilis (strain 168).